Consider the following 156-residue polypeptide: MKALLIAAGVAALSSTAMAAKLDEKVPYPKADAGFTRQVIHLPKQDAEDAFKVEIIAGKTLEADCNQQRLGGELEEHTLEGWGYSYYRLDKVSGPMSTMMACPGQKKEQRFIPVVGEGFLLCYNSKLPIVVYAPKDVEVRYRIWSASEKVEKAVSE.

The signal sequence occupies residues Met-1 to Ala-19. Cys-65 and Cys-102 are oxidised to a cystine.

Belongs to the protease inhibitor I11 (ecotin) family. Homodimer.

It localises to the periplasm. General inhibitor of family S1 serine proteases. The polypeptide is Ecotin (Pseudomonas aeruginosa (strain ATCC 15692 / DSM 22644 / CIP 104116 / JCM 14847 / LMG 12228 / 1C / PRS 101 / PAO1)).